A 1123-amino-acid polypeptide reads, in one-letter code: Leucine-rich repeat receptor-like protein kinase PEPR1 (1123 aa).

The first 28 residues, 1–28 (MKNLGGLFKILLLFFCLFLSTHIISVSC), serve as a signal peptide directing secretion. The Extracellular portion of the chain corresponds to 29–769 (LNSDGLTLLS…SRKSGLSTWQ (741 aa)). The LRR 1 repeat unit spans residues 31-53 (SDGLTLLSLLKHLDRVPPQVTST). Residues Asn57, Asn81, Asn110, and Asn121 are each glycosylated (N-linked (GlcNAc...) asparagine). 7 LRR repeats span residues 74–98 (SKNVASLNFTRSRVSGQLGPEIGEL), 99–122 (KSLQILDLSTNNFSGTIPSTLGNC), 124–145 (KLATLDLSENGFSDKIPDTLDS), 146–170 (LKRLEVLYLYINFLTGELPESLFRI), 171–194 (PKLQVLYLDYNNLTGPIPQSIGDA), 196–218 (ELVELSMYANQFSGNIPESIGNS), and 219–243 (SSLQILYLHRNKLVGSLPESLNLLG). N-linked (GlcNAc...) asparagine glycans are attached at residues Asn182 and Asn217. Asn244, Asn252, Asn289, Asn302, Asn316, Asn321, and Asn337 each carry an N-linked (GlcNAc...) asparagine glycan. LRR repeat units lie at residues 245–266 (LTTLFVGNNSLQGPVRFGSPNC), 267–290 (KNLLTLDLSYNEFEGGVPPALGNC), 292–314 (SLDALVIVSGNLSGTIPSSLGML), 315–338 (KNLTILNLSENRLSGSIPAELGNC), 340–362 (SLNLLKLNDNQLVGGIPSALGKL), 363–386 (RKLESLELFENRFSGEIPIEIWKS), 388–410 (SLTQLLVYQNNLTGELPVEMTEM), 412–434 (KLKIATLFNNSFYGAIPPGLGVN), 435–458 (SSLEEVDFIGNKLTGEIPPNLCHG), 459–482 (RKLRILNLGSNLLHGTIPASIGHC), 484–505 (TIRRFILRENNLSGLLPEFSQD), 506–529 (HSLSFLDFNSNNFEGPIPGSLGSC), 530–553 (KNLSSINLSRNRFTGQIPPQLGNL), 554–577 (QNLGYMNLSRNLLEGSLPAQLSNC), 579–600 (SLERFDVGFNSLNGSVPSNFSN), 601–625 (WKGLTTLVLSENRFSGGIPQFLPEL), 626–650 (KKLSTLQIARNAFGGEIPSSIGLIE), 652–674 (LIYDLDLSGNGLTGEIPAKLGDL), 675–696 (IKLTRLNISNNNLTGSLSVLKG), and 697–721 (LTSLLHVDVSNNQFTGPIPDNLEGQ). Residues Asn398, Asn420, and Asn434 are each glycosylated (N-linked (GlcNAc...) asparagine). Residue Asn494 is glycosylated (N-linked (GlcNAc...) asparagine). Asn531, Asn536, Asn560, Asn591, and Asn597 each carry an N-linked (GlcNAc...) asparagine glycan. Residues Asn681 and Asn686 are each glycosylated (N-linked (GlcNAc...) asparagine). N-linked (GlcNAc...) asparagine glycosylation is present at Asn745. Residues 770–790 (IVLIAVLSSLLVLVVVLALVF) traverse the membrane as a helical segment. Topologically, residues 791 to 1123 (ICLRRRKGRP…ARSCSSDSVR (333 aa)) are cytoplasmic. Position 824 is a phosphothreonine (Thr824). A Protein kinase domain is found at 827–1115 (LNEKYTIGRG…LLEDVKHLAR (289 aa)). Residues 833-841 (IGRGAHGIV) and Lys855 each bind ATP. Residues Tyr901 and Tyr941 each carry the phosphotyrosine modification. Asp954 serves as the catalytic Proton acceptor. Tyr995 carries the phosphotyrosine modification.

It belongs to the protein kinase superfamily. Ser/Thr protein kinase family. As to quaternary structure, interacts with PEP1 and BAK1. Interacts with BIK1 and PBL1. In terms of processing, N-glycosylated.

The protein resides in the cell membrane. The enzyme catalyses L-seryl-[protein] + ATP = O-phospho-L-seryl-[protein] + ADP + H(+). It catalyses the reaction L-threonyl-[protein] + ATP = O-phospho-L-threonyl-[protein] + ADP + H(+). Its function is as follows. Acts as a receptor for PEP defense peptides. Unlike typical immune receptors, senses an endogenous elicitor that potentiates pathogen-associated molecular pattern (PAMP)-inducible plant responses. Involved in PAMP-triggered immunity (PTI) signaling. Interacts with and phosphorylates the kinase BIK1, a central rate-limiting kinase in PTI signaling. The protein is Leucine-rich repeat receptor-like protein kinase PEPR1 (PEPR1) of Arabidopsis thaliana (Mouse-ear cress).